The sequence spans 134 residues: NADH-quinone oxidoreductase subunit A 1 (134 aa).

The next 3 helical transmembrane spans lie at 10–30 (LIPLAIYTLFAVGLIGILLLA), 65–85 (FYLIAIFFIVFDVEGAFILAW), and 94–114 (IPGLVHITLFITVLLLGLVWL).

This sequence belongs to the complex I subunit 3 family. NDH-1 is composed of 14 different subunits. Subunits NuoA, H, J, K, L, M, N constitute the membrane sector of the complex.

It localises to the cell inner membrane. It carries out the reaction a quinone + NADH + 5 H(+)(in) = a quinol + NAD(+) + 4 H(+)(out). In terms of biological role, NDH-1 shuttles electrons from NADH, via FMN and iron-sulfur (Fe-S) centers, to quinones in the respiratory chain. The immediate electron acceptor for the enzyme in this species is believed to be ubiquinone. Couples the redox reaction to proton translocation (for every two electrons transferred, four hydrogen ions are translocated across the cytoplasmic membrane), and thus conserves the redox energy in a proton gradient. The protein is NADH-quinone oxidoreductase subunit A 1 of Citrifermentans bemidjiense (strain ATCC BAA-1014 / DSM 16622 / JCM 12645 / Bem) (Geobacter bemidjiensis).